The primary structure comprises 230 residues: Small ribosomal subunit protein uS3 (230 aa).

One can recognise a KH type-2 domain in the interval 39-107 (VRKFLVEKLQ…PAQINIAEIR (69 aa)).

It belongs to the universal ribosomal protein uS3 family. Part of the 30S ribosomal subunit. Forms a tight complex with proteins S10 and S14.

Binds the lower part of the 30S subunit head. Binds mRNA in the 70S ribosome, positioning it for translation. The sequence is that of Small ribosomal subunit protein uS3 from Shewanella baltica (strain OS223).